The following is a 197-amino-acid chain: Protein-S-isoprenylcysteine O-methyltransferase B (197 aa).

3 consecutive transmembrane segments (helical) span residues 16–36 (MFLA…AIHG), 52–72 (ALAM…FPGL), and 81–101 (FGLT…ITAG). S-adenosyl-L-methionine-binding positions include 116 to 119 (HKLV), Tyr-124, and 129 to 132 (HPSY). Residues 140–160 (VGTQVMLCNPISAIAFAVVVW) traverse the membrane as a helical segment. Substrate is bound at residue Arg-166. Glu-170 contributes to the S-adenosyl-L-methionine binding site.

It belongs to the class VI-like SAM-binding methyltransferase superfamily. Isoprenylcysteine carboxyl methyltransferase family. It depends on Zn(2+) as a cofactor. Expressed in flowers, stems, leaves, roots and siliques. Detected in apices and vascular tissues of leaves and roots, in the stigma and in the filaments and anthers of stamen. Not found in petioles or hypocotyls.

It is found in the endoplasmic reticulum membrane. The catalysed reaction is [protein]-C-terminal S-[(2E,6E)-farnesyl]-L-cysteine + S-adenosyl-L-methionine = [protein]-C-terminal S-[(2E,6E)-farnesyl]-L-cysteine methyl ester + S-adenosyl-L-homocysteine. Inhibited by farnesylthioacetic acid (FTAA) and N-acetyl-S-trans, trans-farnesyl-l-cysteine (AFC). Functionally, catalyzes the post-translational methylation of isoprenylated C-terminal cysteine residues, resulting in the modulation of the function of prenylated proteins. Involved in negative regulation of abscisic acid signaling. Carboxyl methylation is a reversible and potentially regulated step in the post-translational modification of prenylated proteins. This Arabidopsis thaliana (Mouse-ear cress) protein is Protein-S-isoprenylcysteine O-methyltransferase B.